The following is a 239-amino-acid chain: 7-cyano-7-deazaguanine synthase (239 aa).

Residue 13-23 coordinates ATP; that stretch reads FSGGQDSTTCL. Cysteine 192, cysteine 201, cysteine 204, and cysteine 207 together coordinate Zn(2+).

Belongs to the QueC family. Zn(2+) is required as a cofactor.

The enzyme catalyses 7-carboxy-7-deazaguanine + NH4(+) + ATP = 7-cyano-7-deazaguanine + ADP + phosphate + H2O + H(+). The protein operates within purine metabolism; 7-cyano-7-deazaguanine biosynthesis. In terms of biological role, catalyzes the ATP-dependent conversion of 7-carboxy-7-deazaguanine (CDG) to 7-cyano-7-deazaguanine (preQ(0)). This chain is 7-cyano-7-deazaguanine synthase, found in Shewanella sp. (strain MR-7).